Consider the following 1064-residue polypeptide: mRNA 3'-end-processing protein RNA14 (1064 aa).

2 disordered regions span residues 34–106 and 119–192; these read ASQS…APSA and SETP…ASAV. A compositionally biased stretch (polar residues) spans 44–54; it reads AQDQKSHSTLL. Composition is skewed to low complexity over residues 66–86 and 151–191; these read SAIPAAPGSSSTAAASDAIGD and QPAE…AASA. HAT repeat units follow at residues 327-364, 377-412, 423-456, 673-706, and 777-811; these read SNFAEVEAIFASTLKGSAGITTAADVSIWAAYLHYIRR, DVRSTITEAYEFALRECGFDRESGDIWDEYIKFVAS, AKNDNLRKIYQRAVCIPLNNIEALWKSYDNFESS, QRGALVAQRRGKDIEELMVGISVVWIMYMRFARR, and NDDNNARALFERSVVRIMGDKARPLWDAWARYEYT. 2 disordered regions span residues 888–985 and 1022–1064; these read AVPT…DRSG and LPGA…SGRY. Basic and acidic residues-rich tracts occupy residues 899-910 and 933-948; these read SYKRPAPEDIPP and RYPERDDRPPPGRYRD. Pro residues predominate over residues 1026–1042; that stretch reads GMPPAPPISRGPPPPPM.

Its subcellular location is the nucleus. It localises to the cytoplasm. In terms of biological role, component of the cleavage factor IA (CFIA) complex, which is involved in the endonucleolytic cleavage during polyadenylation-dependent pre-mRNA 3'-end formation. The chain is mRNA 3'-end-processing protein RNA14 (RNA14) from Cryptococcus neoformans var. neoformans serotype D (strain B-3501A) (Filobasidiella neoformans).